The sequence spans 125 residues: Small ribosomal subunit protein uS13 (125 aa).

Positions 90–125 are disordered; that stretch reads QRHRKGLPVRGQRTKTNARTRKGPKRTVAGKKKATK.

It belongs to the universal ribosomal protein uS13 family. Part of the 30S ribosomal subunit. Forms a loose heterodimer with protein S19. Forms two bridges to the 50S subunit in the 70S ribosome.

In terms of biological role, located at the top of the head of the 30S subunit, it contacts several helices of the 16S rRNA. In the 70S ribosome it contacts the 23S rRNA (bridge B1a) and protein L5 of the 50S subunit (bridge B1b), connecting the 2 subunits; these bridges are implicated in subunit movement. Contacts the tRNAs in the A and P-sites. This chain is Small ribosomal subunit protein uS13, found in Bifidobacterium adolescentis (strain ATCC 15703 / DSM 20083 / NCTC 11814 / E194a).